A 270-amino-acid polypeptide reads, in one-letter code: Acyl-[acyl-carrier-protein]--UDP-N-acetylglucosamine O-acyltransferase (270 aa).

It belongs to the transferase hexapeptide repeat family. LpxA subfamily. As to quaternary structure, homotrimer.

The protein resides in the cytoplasm. It catalyses the reaction a (3R)-hydroxyacyl-[ACP] + UDP-N-acetyl-alpha-D-glucosamine = a UDP-3-O-[(3R)-3-hydroxyacyl]-N-acetyl-alpha-D-glucosamine + holo-[ACP]. It functions in the pathway glycolipid biosynthesis; lipid IV(A) biosynthesis; lipid IV(A) from (3R)-3-hydroxytetradecanoyl-[acyl-carrier-protein] and UDP-N-acetyl-alpha-D-glucosamine: step 1/6. Involved in the biosynthesis of lipid A, a phosphorylated glycolipid that anchors the lipopolysaccharide to the outer membrane of the cell. The protein is Acyl-[acyl-carrier-protein]--UDP-N-acetylglucosamine O-acyltransferase of Sinorhizobium medicae (strain WSM419) (Ensifer medicae).